A 717-amino-acid polypeptide reads, in one-letter code: MKSALSVVVAAAGVQQASATFGLLGGGGISFNFGLDWSGAKTFPCPGNVVNKCTPEQENGWDWSDVATGSLNTYAGFNFGGGWSCESNFGKRGDIQGRTFGLGKVISGSCDQGDEAGLSIGVGASAGIDAFSIDSFDMSTEFDARLEFHYDMPDGSVCKQTSDCKRGGSTIVNKQCGGAKKVRVIYPKQIIHKGISFSKKCKISCHKIKWHCGKPTPKPSTSVLTLPSTSTKVIQTTPVTTLQTYTTPSQQTTTPEKETTSSKETTTSAQQTTPGKETTPAQQTTPSKETTPVQQTTSGKETTPAQQTTPGKETTSSQETTSAHQTTPGKETTPAQQTTPGKETTPAQQTTPGKETTPAQQTTPGKETTPAQQTTPGQQTTPSQPTTAATTTPATTFVTTYDTTSTVYTTSTKTITSCGPEVTDCPGKTGPHIVTVTIPVSTTICPVTETRTQSQGVPTTVILPSKSETTVKEQPTPEQPTPEQPTGEKPNPVTSQPPQSTQTPPCPPVVPRCLNTFVDLKAKCADNKDASCFCPDKDFVKNIFDCIYAHGESDNIISEAISFFQGICGRYIPENPVIATGAETITQIITVTGTPHITQVPYTTVVVATTITENSSTQTISTEVTIPNIVMPTPTGGVPNQPPATASVPAGQNPPPVTGQNPPPAVTDQSPPPAITTGTGGVIPPKPTGSVPVTAGSGRVGAGLGMVLAVAAFVAAL.

A signal peptide spans Met1–Ala19. 2 stretches are compositionally biased toward low complexity: residues Thr237–Thr254 and Ser262–Pro274. 2 disordered regions span residues Thr237–Thr392 and Arg451–Cys506. 8 consecutive repeat copies span residues Gly275–Pro286, Ser287–Ser298, Gly299–Pro310, Gly311–Pro328, Gly329–Pro340, Gly341–Pro352, Gly353–Pro364, and Gly365–Pro376. Residues Gly275–Lys366 show a composition bias toward polar residues. 2 stretches are compositionally biased toward low complexity: residues Thr368–Thr392 and Gln484–Thr503. In terms of domain architecture, CFEM spans Thr481–Pro595. 3 disulfide bridges follow: Cys513-Cys546, Cys524-Cys532, and Cys534-Cys568. Asp529 contacts heme. Asn614 carries an N-linked (GlcNAc...) asparagine glycan. The disordered stretch occupies residues Pro632 to Ser690. Over residues Gln652–Ala674 the composition is skewed to pro residues. Ala695 carries GPI-anchor amidated alanine lipidation. Positions Gly696 to Leu717 are cleaved as a propeptide — removed in mature form.

This sequence belongs to the RBT5 family. Post-translationally, the GPI-anchor is attached to the protein in the endoplasmic reticulum and serves to target the protein to the cell surface. There, the glucosamine-inositol phospholipid moiety is cleaved off and the GPI-modified mannoprotein is covalently attached via its lipidless GPI glycan remnant to the 1,6-beta-glucan of the outer cell wall layer.

The protein resides in the secreted. It is found in the cell wall. Its subcellular location is the cell membrane. Its function is as follows. Cell surface adhesion protein that plays a key role in virulence by allowing adherence to the insect host surface. Required to orientate the cytoskeleton and stimulate the expression of genes involved in the cell cycle. Is also involved in achieving the septin hourglass shape and subsequent separation of cells. This chain is Adhesion cell surface protein MAD1, found in Metarhizium anisopliae (Entomophthora anisopliae).